The primary structure comprises 211 residues: Large ribosomal subunit protein eL13 (211 aa).

It belongs to the eukaryotic ribosomal protein eL13 family. Component of the 60S large ribosomal subunit (LSU).

The protein localises to the cytoplasm. In terms of biological role, component of the ribosome, a large ribonucleoprotein complex responsible for the synthesis of proteins in the cell. The small ribosomal subunit (SSU) binds messenger RNAs (mRNAs) and translates the encoded message by selecting cognate aminoacyl-transfer RNA (tRNA) molecules. The large subunit (LSU) contains the ribosomal catalytic site termed the peptidyl transferase center (PTC), which catalyzes the formation of peptide bonds, thereby polymerizing the amino acids delivered by tRNAs into a polypeptide chain. The nascent polypeptides leave the ribosome through a tunnel in the LSU and interact with protein factors that function in enzymatic processing, targeting, and the membrane insertion of nascent chains at the exit of the ribosomal tunnel. As part of the LSU, it is probably required for its formation and the maturation of rRNAs. This Ictalurus punctatus (Channel catfish) protein is Large ribosomal subunit protein eL13 (rpl13).